A 528-amino-acid polypeptide reads, in one-letter code: Coiled-coil domain-containing protein 116 (528 aa).

Residues 43–68 are disordered; sequence GHVPHPPSTCGSSALQNQRRNKRHPQ. Positions 51–60 are enriched in polar residues; it reads TCGSSALQNQ. Positions 81 to 104 form a coiled coil; that stretch reads HVLDSLETVVEKATERMAAMKTEA. Disordered stretches follow at residues 335–444 and 497–528; these read PLFP…RQRA and SSSPSSLCPEVTSSKVGPDMSLQEKGSLTHHS. Positions 363–378 are enriched in polar residues; it reads PTNSGQPHPTVSSPKT. Phosphoserine is present on Ser389. Residues 419-429 show a composition bias toward basic and acidic residues; the sequence is HSREKEPDSDP. The span at 434-443 shows a compositional bias: polar residues; the sequence is PPVSLSSRQR. A compositionally biased stretch (low complexity) spans 497–510; sequence SSSPSSLCPEVTSS.

It localises to the cytoplasm. The protein resides in the cytoskeleton. Its subcellular location is the microtubule organizing center. The protein localises to the centrosome. The chain is Coiled-coil domain-containing protein 116 (CCDC116) from Macaca fascicularis (Crab-eating macaque).